Reading from the N-terminus, the 174-residue chain is Large ribosomal subunit protein uL10 (174 aa).

The protein belongs to the universal ribosomal protein uL10 family. Part of the ribosomal stalk of the 50S ribosomal subunit. The N-terminus interacts with L11 and the large rRNA to form the base of the stalk. The C-terminus forms an elongated spine to which L12 dimers bind in a sequential fashion forming a multimeric L10(L12)X complex.

Functionally, forms part of the ribosomal stalk, playing a central role in the interaction of the ribosome with GTP-bound translation factors. The chain is Large ribosomal subunit protein uL10 from Rubrobacter xylanophilus (strain DSM 9941 / JCM 11954 / NBRC 16129 / PRD-1).